The primary structure comprises 486 residues: GDP-Man:Man(3)GlcNAc(2)-PP-Dol alpha-1,2-mannosyltransferase (486 aa).

The Lumenal portion of the chain corresponds to 1 to 16 (MAGPMCLCGMMRLLTA). A helical membrane pass occupies residues 17 to 37 (LFIPVLITSVGLCLIFVLLFI). The Cytoplasmic portion of the chain corresponds to 38–229 (CTRLWVQRKK…SNNPVLSRLK (192 aa)). Positions 230-250 (LIYYYLFALFYGWVGSCSDVI) form an intramembrane region, helical. Topologically, residues 251 to 393 (MVNSTWTFSH…IGLHTMWNEH (143 aa)) are cytoplasmic. The helical intramembrane region spans 394 to 414 (FGIGIVECMAAGTIILAHNSG). The Cytoplasmic portion of the chain corresponds to 415-486 (GPKLDIVVPH…FLASSEPLFK (72 aa)).

The protein belongs to the glycosyltransferase group 1 family. Glycosyltransferase 4 subfamily.

The protein resides in the endoplasmic reticulum membrane. It catalyses the reaction an alpha-D-Man-(1-&gt;3)-[alpha-D-Man-(1-&gt;6)]-beta-D-Man-(1-&gt;4)-beta-D-GlcNAc-(1-&gt;4)-alpha-D-GlcNAc-diphospho-di-trans,poly-cis-dolichol + 2 GDP-alpha-D-mannose = an alpha-D-Man-(1-&gt;2)-alpha-D-Man-(1-&gt;2)-alpha-D-Man-(1-&gt;3)-[alpha-D-Man-(1-&gt;6)]-beta-D-Man-(1-&gt;4)-beta-D-GlcNAc-(1-&gt;4)-alpha-D-GlcNAc-diphospho-di-trans,poly-cis-dolichol + 2 GDP + 2 H(+). It participates in protein modification; protein glycosylation. Functionally, GDP-Man:Man(3)GlcNAc(2)-PP-Dol alpha-1,2-mannosyltransferase that operates in the biosynthetic pathway of dolichol-linked oligosaccharides, the glycan precursors employed in protein asparagine (N)-glycosylation. The assembly of dolichol-linked oligosaccharides begins on the cytosolic side of the endoplasmic reticulum membrane and finishes in its lumen. The sequential addition of sugars to dolichol pyrophosphate produces dolichol-linked oligosaccharides containing fourteen sugars, including two GlcNAcs, nine mannoses and three glucoses. Once assembled, the oligosaccharide is transferred from the lipid to nascent proteins by oligosaccharyltransferases. Catalyzes, on the cytoplasmic face of the endoplasmic reticulum, the addition of the fourth and fifth mannose residues to the dolichol-linked oligosaccharide chain, to produce Man(5)GlcNAc(2)-PP-dolichol core oligosaccharide. Man(5)GlcNAc(2)-PP-dolichol is a substrate for ALG3, the following enzyme in the biosynthetic pathway. The sequence is that of GDP-Man:Man(3)GlcNAc(2)-PP-Dol alpha-1,2-mannosyltransferase (alg11) from Xenopus laevis (African clawed frog).